We begin with the raw amino-acid sequence, 420 residues long: Type II methyltransferase M.NmeDI (420 aa).

Residues 1-23 (MMSLKIQPAVPKKSDKPSATNRD) form a disordered region. Positions 56–411 (TLIFSFFSGA…MTLKSYLENH (356 aa)) constitute an SAM-dependent MTase C5-type domain. Residue cysteine 148 is part of the active site.

It belongs to the class I-like SAM-binding methyltransferase superfamily. C5-methyltransferase family.

It carries out the reaction a 2'-deoxycytidine in DNA + S-adenosyl-L-methionine = a 5-methyl-2'-deoxycytidine in DNA + S-adenosyl-L-homocysteine + H(+). In terms of biological role, a methylase that recognizes the double-stranded sequence 5'-RCCGGB-3', methylates C-2 on both strands, and protects the DNA from cleavage by the NmeDI endonuclease. This Neisseria meningitidis serogroup C protein is Type II methyltransferase M.NmeDI (nmeDIMP).